The chain runs to 909 residues: MTTPSMQPQWAFMHIAGQDASQYLSPGVVQFAAATDTYFSLGNKFRNPTVAPTHDVTTDRSQRLTLRIVPVDREDSQYTYKTRFQLSVGDNRVLDMASTYFDIRGRLDRGPSFKPYSGTAYNSLAPRAAPNNLMFKTGADSKTMTIAQANIVGSTIDQDGLKINNVALNPNAGEPAVQEGLENWMEELQIGADKKFASRVLKADQPVLPNYGSYAYPTNINGTQTKDGTTVDKVYMCSKGANVQNPDVVLYSEEVNLQAPDTHLLDGPGADNPKDRVAFCAAPNRPNYIGFRDNFIGLMYYNSNGNQGVLAGQASQLNAVVDLQDRNTELSYQFLLDSLYDRSRYFSLWNQAIDSYDPRVRIIENDGVEDDITSFAFDLRGIGDLPYKQVQTHNGNQQSANTTDTCYIGKGNMAAMEINIPANLWLGFLYANVAQYMPDDFKVDPSNIQMPQDKTTYAYMNQRIAPAGLIETYVNVGGRWSVDFMDTVNPFNHHRNEGLKYRSQILGNGRFVDFHIQVPQKFFAIKSLLLLPGSYTYEWSFRKDVNMVLQSSLGNDLRADGARLEIHSVNLYASFFPMAHNTASTLEAMLRNETNDQTFLDYLSSATMMFPIPAGQTQVPVSIPARNWAAFRGWSFTRIKQQETPNIGSPYDPYFKYSGSIPFLDATFYLTHTFQRVSIMFDSSVSWPGNDRLLTPNEFEIKRHIDAEGLCVGQSNMTKDWFLVQMLSNYNIGYQGFYLPENNKDRTYSFVRNFEPLARQVVDDAAAANYRDVPLSKRFNNSGWRSAGPPIFAREGAPYPANWPYPLCGEAAWAAKTQRKFLVDRYMYRIPFSSNFMSMGALTDLGQNLLYANSAHSLEMTFNVDPMQEATFLYILFEVFDCVRIHQPHRGIIEAVYLRSPFSAGNATT.

The residue at position 897 (tyrosine 897) is a Phosphotyrosine; by host.

This sequence belongs to the adenoviridae hexon protein family. Homotrimer. Interacts with the capsid vertex protein; this interaction binds the peripentonal hexons to the neighboring penton base. Interacts with the hexon-linking protein; this interaction tethers the hexons surrounding the penton to those situated in the central plate of the facet. Interacts with the hexon-interlacing protein; this interaction lashes the hexons together. Interacts with host dyneins DYNC1LI1 and DYNC1I2; this interaction might be involved in intracellular microtubule-dependent transport of incoming viral capsid. Interacts with the shutoff protein; this interaction allows folding and formation of hexons trimers. Interacts with pre-protein VI; this interaction probably allows nuclear import of hexon trimers and possibly pre-capsid assembly.

The protein localises to the virion. Its subcellular location is the host nucleus. Its function is as follows. Major capsid protein that self-associates to form 240 hexon trimers, each in the shape of a hexagon, building most of the pseudo T=25 capsid. Assembled into trimeric units with the help of the chaperone shutoff protein. Transported by pre-protein VI to the nucleus where it associates with other structural proteins to form an empty capsid. Might be involved, through its interaction with host dyneins, in the intracellular microtubule-dependent transport of incoming viral capsid to the nucleus. The polypeptide is Hexon protein (Murine adenovirus A serotype 1 (MAdV-1)).